The sequence spans 229 residues: Dihydrofolate reductase (229 aa).

One can recognise a DHFR domain in the interval 11-227 (SITAVVAATA…VKYIFEMWVL (217 aa)). NADP(+)-binding positions include alanine 17 and 23–29 (GIGLNGG). 37–42 (EMKYFA) is a binding site for substrate. NADP(+) is bound at residue 64–66 (RKT). Substrate is bound at residue arginine 80. NADP(+)-binding positions include 86 to 88 (SGK) and 127 to 134 (GGATLYTS).

It belongs to the dihydrofolate reductase family. As to quaternary structure, monomer.

The catalysed reaction is (6S)-5,6,7,8-tetrahydrofolate + NADP(+) = 7,8-dihydrofolate + NADPH + H(+). The protein operates within cofactor biosynthesis; tetrahydrofolate biosynthesis; 5,6,7,8-tetrahydrofolate from 7,8-dihydrofolate: step 1/1. Functionally, key enzyme in folate metabolism. Catalyzes an essential reaction for de novo glycine and purine synthesis, and for DNA precursor synthesis. The protein is Dihydrofolate reductase (DFR1) of Cryptococcus neoformans var. neoformans serotype D (strain JEC21 / ATCC MYA-565) (Filobasidiella neoformans).